The sequence spans 215 residues: Reticulon-like protein B14 (215 aa).

The Reticulon domain maps to 31 to 211; it reads FADIMFWKNK…NKIPKAQAKT (181 aa). 3 helical membrane passes run 41 to 61, 62 to 82, and 141 to 161; these read KESG…EVVE, YPFI…FLIW, and LWIL…YIVF.

The protein resides in the endoplasmic reticulum membrane. The protein is Reticulon-like protein B14 (RTNLB14) of Arabidopsis thaliana (Mouse-ear cress).